The following is a 336-amino-acid chain: Dihydroorotate dehydrogenase (quinone) (336 aa).

FMN contacts are provided by residues 62–66 and Thr86; that span reads AGLDK. Substrate is bound at residue Lys66. 111–115 is a binding site for substrate; sequence NRMGF. Asn139 and Asn172 together coordinate FMN. Position 172 (Asn172) interacts with substrate. Catalysis depends on Ser175, which acts as the Nucleophile. Asn177 lines the substrate pocket. Residues Lys217 and Thr245 each coordinate FMN. Position 246–247 (246–247) interacts with substrate; that stretch reads NT. Residues Gly268, Gly297, and 318-319 contribute to the FMN site; that span reads YS.

It belongs to the dihydroorotate dehydrogenase family. Type 2 subfamily. Monomer. It depends on FMN as a cofactor.

It localises to the cell membrane. It carries out the reaction (S)-dihydroorotate + a quinone = orotate + a quinol. It participates in pyrimidine metabolism; UMP biosynthesis via de novo pathway; orotate from (S)-dihydroorotate (quinone route): step 1/1. Its function is as follows. Catalyzes the conversion of dihydroorotate to orotate with quinone as electron acceptor. The chain is Dihydroorotate dehydrogenase (quinone) from Salmonella arizonae (strain ATCC BAA-731 / CDC346-86 / RSK2980).